The following is a 215-amino-acid chain: Probable phosphoglycerate mutase GpmB (215 aa).

Substrate-binding positions include 8-15 (RHGETLWN), 21-22 (QG), Arg-58, 82-85 (ELNM), and 151-152 (GM). The Tele-phosphohistidine intermediate role is filled by His-9. Glu-82 (proton donor/acceptor) is an active-site residue.

The protein belongs to the phosphoglycerate mutase family. GpmB subfamily.

It carries out the reaction (2R)-2-phosphoglycerate = (2R)-3-phosphoglycerate. It participates in carbohydrate degradation; glycolysis; pyruvate from D-glyceraldehyde 3-phosphate: step 3/5. In Yersinia pseudotuberculosis serotype O:1b (strain IP 31758), this protein is Probable phosphoglycerate mutase GpmB.